A 487-amino-acid chain; its full sequence is Schwannomin-interacting protein 1 (487 aa).

Disordered stretches follow at residues 1 to 74 (MERS…VSAL), 88 to 221 (VIDE…PVPP), 236 to 260 (FREQ…NERE), and 308 to 354 (SGSD…SLDD). The segment covering 14–27 (DQGKHSDSDYREDG) has biased composition (basic and acidic residues). Positions 32 to 67 (SDAGSSSSSSRASSQSNSTKVTPCSECKSSSSPGGS) are enriched in low complexity. Acidic residues predominate over residues 92-106 (WAPEEDGEEEEEEDE). 2 stretches are compositionally biased toward basic and acidic residues: residues 107-123 (RDQR…REPG) and 153-162 (HQHDPQDLRH). A Phosphoserine modification is found at serine 117. The segment covering 242–255 (RNQGQARTNSTSAQ) has biased composition (polar residues). The span at 309–323 (GSDKDSDADDSKTET) shows a compositional bias: basic and acidic residues. The segment covering 324–335 (SLDTPLSPMSKQ) has biased composition (polar residues). The span at 344–354 (TTEEESESLDD) shows a compositional bias: acidic residues. Residues 424 to 458 (IGQLQVIVNDLHSQIESLNEELVQLLLIRDELHTE) adopt a coiled-coil conformation.

The protein belongs to the SCHIP1 family. Homooligomer (via coiled coil domain). Interacts with NF2; the interaction is direct. Interacts with ANK3. In terms of tissue distribution, preferentially expressed in brain, skeletal muscles and heart. Also expressed in detected in pancreas, kidney, liver, lung, and placenta.

It localises to the cytoplasm. This chain is Schwannomin-interacting protein 1, found in Homo sapiens (Human).